A 511-amino-acid chain; its full sequence is ADP,ATP carrier protein 4 (511 aa).

Helical transmembrane passes span Val34–Ile54, Ile71–Val91, Ile102–Phe122, Phe157–Trp177, Phe192–Glu212, Phe231–Ile251, Leu296–Lys316, Ala330–Leu350, Phe361–Val381, Leu390–Ile410, Leu453–Ser473, and Ser476–Thr496.

Belongs to the ADP/ATP translocase tlc family.

The protein resides in the cell membrane. Functionally, provides the rickettsial cell with host ATP in exchange for rickettsial ADP. This is an obligate exchange system. This energy acquiring activity is an important component of rickettsial parasitism. In Rickettsia felis (strain ATCC VR-1525 / URRWXCal2) (Rickettsia azadi), this protein is ADP,ATP carrier protein 4 (tlcD).